A 457-amino-acid polypeptide reads, in one-letter code: Tubulin gamma-2 chain (457 aa).

GTP is bound at residue 142 to 148; it reads AGGTGSG.

It belongs to the tubulin family. Interacts with Ote. Expressed in nurse cells and oocytes of developing egg chambers.

The protein localises to the cytoplasm. Its subcellular location is the cytoskeleton. The protein resides in the microtubule organizing center. It is found in the centrosome. It localises to the spindle. Functionally, tubulin is the major constituent of microtubules. The gamma chain is found at microtubule organizing centers (MTOC) such as the spindle poles or the centrosome, suggesting that it is involved in the minus-end nucleation of microtubule assembly. Required for oocyte activation and consequently for organization of the female meiotic spindle. Essential for centrosome organization and assembly of biastral mitotic spindles in embryos. Plays a role in stabilizing the augmin complex on the meiotic spindle. The sequence is that of Tubulin gamma-2 chain (gammaTub37C) from Drosophila melanogaster (Fruit fly).